The chain runs to 235 residues: Thiamine import ATP-binding protein ThiQ (235 aa).

An ABC transporter domain is found at 2 to 230; that stretch reads LKLIDITWLY…QASASALLGI (229 aa). 32 to 39 lines the ATP pocket; the sequence is GPSGAGKS.

This sequence belongs to the ABC transporter superfamily. Thiamine importer (TC 3.A.1.19.1) family. In terms of assembly, the complex is composed of two ATP-binding proteins (ThiQ), two transmembrane proteins (ThiP) and a solute-binding protein (ThiB).

Its subcellular location is the cell inner membrane. It catalyses the reaction thiamine(out) + ATP + H2O = thiamine(in) + ADP + phosphate + H(+). Its function is as follows. Part of the ABC transporter complex ThiBPQ involved in thiamine import. Responsible for energy coupling to the transport system. This is Thiamine import ATP-binding protein ThiQ from Salmonella choleraesuis (strain SC-B67).